We begin with the raw amino-acid sequence, 1248 residues long: Apoptotic protease-activating factor 1 (1248 aa).

Positions 1–90 (MDAKARNCLL…KDLAALLHDG (90 aa)) constitute a CARD domain. Positions 104–415 (SGITSYVRTV…METEEVEDIL (312 aa)) constitute an NB-ARC domain. ATP contacts are provided by residues 154 to 161 (GMAGCGKS) and Arg-265. The stretch at 613 to 652 (PHTDAVYHACFSEDGQRIASCGADKTLQVFKAETGEKLLE) is one WD 1-1 repeat. The WD 1-2 repeat unit spans residues 655–694 (AHEDEVLCCAFSTDDRFIATCSVDKKVKIWNSMTGELVHT). A WD 1-3 repeat occupies 697–738 (EHSEQVNCCHFTNSSHHLLLATGSSDCFLKLWDLNQKECRNT). A WD 1-4 repeat occupies 741–780 (GHTNSVNHCRFSPDDKLLASCSADGTLKLWDATSANERKS). One copy of the WD 1-5 repeat lies at 796–836 (DMEVIVKCCSWSADGARIMVAAKNKIFLFDIHTSGLLGEIH). The stretch at 838–877 (GHHSTIQYCDFSPQNHLAVVALSQYCVELWNTDSRSKVAD) is one WD 1-6 repeat. A WD 1-7 repeat occupies 880-910 (GHLSWVHGVMFSPDGSSFLTSSDDQTIRLWE). Residues 910–921 (ETKKVCKNSAVM) form an interpropeller linker region. A WD 2-1 repeat occupies 922–958 (LKQEVDVVFQENEVMVLAVDHIRRLQLINGRTGQIDY). The WD 2-2 repeat unit spans residues 959–998 (LTEAQVSCCCLSPHLQYIAFGDENGAIEILELVNNRIFQS). One copy of the WD 2-3 repeat lies at 1001 to 1040 (QHKKTVWHIQFTADEKTLISSSDDAEIQVWNWQLDKCIFL). A WD 2-4 repeat occupies 1042 to 1080 (GHQETVKDFRLLKNSRLLSWSFDGTVKVWNIITGNKEKD). A WD 2-5 repeat occupies 1083–1122 (CHQGTVLSCDISHDATKFSSTSADKTAKIWSFDLLLPLHE). A WD 2-6 repeat occupies 1125-1164 (GHNGCVRCSAFSVDSTLLATGDDNGEIRIWNVSNGELLHL). Residues 1175-1212 (THGGWVTDLCFSPDGKMLISAGGYIKWWNVVTGESSQT) form a WD 2-7 repeat. Residues 1213–1248 (FYTNGTNLKKIHVSPDFKTYVTVDNLGILYILQTLE) form a WD 2-8 repeat.

Monomer. Oligomerizes to a heptameric ring, known as the apoptosome, upon binding of cytochrome c and dATP. Oligomeric Apaf-1 and pro-caspase-9 bind to each other via their respective NH2-terminal CARD domains and consecutively mature caspase-9 is released from the complex. Pro-caspase-3 is recruited into the Apaf-1-pro-caspase-9 complex via interaction with pro-caspase-9. Interacts with APIP. Interacts (via CARD and NACHT domains) with NAIP/BIRC1 (via NACHT domain). Interacts with CIAO2A. As to expression, ubiquitous. Highest levels of expression in adult spleen and peripheral blood leukocytes, and in fetal brain, kidney and lung. Isoform 1 is expressed in heart, kidney and liver.

The protein localises to the cytoplasm. Functionally, oligomeric Apaf-1 mediates the cytochrome c-dependent autocatalytic activation of pro-caspase-9 (Apaf-3), leading to the activation of caspase-3 and apoptosis. This activation requires ATP. Isoform 6 is less effective in inducing apoptosis. This Homo sapiens (Human) protein is Apoptotic protease-activating factor 1.